A 442-amino-acid polypeptide reads, in one-letter code: Trigger factor (442 aa).

A PPIase FKBP-type domain is found at 163 to 248 (GDQVVIDFLG…IKEVKAPKAA (86 aa)).

The protein belongs to the FKBP-type PPIase family. Tig subfamily.

The protein localises to the cytoplasm. The enzyme catalyses [protein]-peptidylproline (omega=180) = [protein]-peptidylproline (omega=0). In terms of biological role, involved in protein export. Acts as a chaperone by maintaining the newly synthesized protein in an open conformation. Functions as a peptidyl-prolyl cis-trans isomerase. The protein is Trigger factor of Dinoroseobacter shibae (strain DSM 16493 / NCIMB 14021 / DFL 12).